The sequence spans 342 residues: 6-hydroxytryprostatin B O-methyltransferase (342 aa).

D201 provides a ligand contact to S-adenosyl-L-methionine. H244 functions as the Proton acceptor in the catalytic mechanism.

This sequence belongs to the class I-like SAM-binding methyltransferase superfamily. Cation-independent O-methyltransferase family. As to quaternary structure, homodimer.

The catalysed reaction is 6-hydroxytryprostatin B + S-adenosyl-L-methionine = tryprostatin A + S-adenosyl-L-homocysteine + H(+). It participates in alkaloid biosynthesis. Functionally, 6-hydroxytryprostatin B O-methyltransferase; part of the gene cluster that mediates the biosynthesis of fumitremorgins, indole alkaloids that carry not only intriguing chemical structures, but also interesting biological and pharmacological activities. The biosynthesis of fumitremorgin-type alkaloids begins by condensation of the two amino acids L-tryptophan and L-proline to brevianamide F, catalyzed by the non-ribosomal peptide synthetase ftmA. Brevianamide F is then prenylated by the prenyltransferase ftmPT1/ftmB in the presence of dimethylallyl diphosphate, resulting in the formation of tryprostatin B. The three cytochrome P450 monooxygenases, ftmP450-1/ftmC, ftmP450-2/ftmE and ftmP450-3/FtmG, are responsible for the conversion of tryprostatin B to 6-hydroxytryprostatin B, tryprostatin A to fumitremorgin C and fumitremorgin C to 12,13-dihydroxyfumitremorgin C, respectively. The putative methyltransferase ftmMT/ftmD is expected for the conversion of 6-hydroxytryprostatin B to tryprostatin A. FtmPT2/FtmH catalyzes the prenylation of 12,13-dihydroxyfumitre-morgin C in the presence of dimethylallyl diphosphate, resulting in the formation of fumitremorgin B. Fumitremorgin B is further converted to verruculogen by ftmOx1/ftmF via the insertion of an endoperoxide bond between the two prenyl moieties. In some fungal species, verruculogen is further converted to fumitremorgin A, but the enzymes involved in this step have not been identified yet. In Aspergillus fumigatus (Neosartorya fumigata), this protein is 6-hydroxytryprostatin B O-methyltransferase.